We begin with the raw amino-acid sequence, 591 residues long: Aspartate--tRNA ligase (591 aa).

Glu172 is a binding site for L-aspartate. The tract at residues 196 to 199 (QLFK) is aspartate. Position 218 (Arg218) interacts with L-aspartate. Residues 218 to 220 (RDE) and Gln227 each bind ATP. His449 serves as a coordination point for L-aspartate. Residue Glu483 participates in ATP binding. Arg490 provides a ligand contact to L-aspartate. Residue 535–538 (GLDR) participates in ATP binding.

The protein belongs to the class-II aminoacyl-tRNA synthetase family. Type 1 subfamily. Homodimer.

Its subcellular location is the cytoplasm. It catalyses the reaction tRNA(Asp) + L-aspartate + ATP = L-aspartyl-tRNA(Asp) + AMP + diphosphate. Functionally, catalyzes the attachment of L-aspartate to tRNA(Asp) in a two-step reaction: L-aspartate is first activated by ATP to form Asp-AMP and then transferred to the acceptor end of tRNA(Asp). The sequence is that of Aspartate--tRNA ligase from Actinobacillus pleuropneumoniae serotype 7 (strain AP76).